A 264-amino-acid chain; its full sequence is Small ribosomal subunit protein uS3 (264 aa).

The 69-residue stretch at Val39 to Arg107 folds into the KH type-2 domain. The tract at residues Asn211 to Glu264 is disordered. The segment covering Glu221–Gly239 has biased composition (basic and acidic residues). The segment covering Arg240–Ser255 has biased composition (gly residues).

It belongs to the universal ribosomal protein uS3 family. As to quaternary structure, part of the 30S ribosomal subunit. Forms a tight complex with proteins S10 and S14.

Its function is as follows. Binds the lower part of the 30S subunit head. Binds mRNA in the 70S ribosome, positioning it for translation. The polypeptide is Small ribosomal subunit protein uS3 (Ralstonia nicotianae (strain ATCC BAA-1114 / GMI1000) (Ralstonia solanacearum)).